Reading from the N-terminus, the 1533-residue chain is DNA topoisomerase 2-alpha (1533 aa).

M1 carries the N-acetylmethionine modification. The disordered stretch occupies residues 1 to 22 (MEVSPLQPVNENMQVNKTKKNE). A Phosphoserine modification is found at S4. A compositionally biased stretch (polar residues) spans 7 to 16 (QPVNENMQVN). Residue K17 forms a Glycyl lysine isopeptide (Lys-Gly) (interchain with G-Cter in SUMO2) linkage. Residues N91, N120, and 148-150 (SSN) contribute to the ATP site. Residues K156 and K157 each participate in a glycyl lysine isopeptide (Lys-Gly) (interchain with G-Cter in SUMO2) cross-link. Residue 161–168 (GRNGYGAK) participates in ATP binding. Residue K261 forms a Glycyl lysine isopeptide (Lys-Gly) (interchain with G-Cter in SUMO2) linkage. Phosphothreonine is present on T282. Positions 342 to 344 (KKK) are interaction with DNA. Residue K352 forms a Glycyl lysine isopeptide (Lys-Gly) (interchain with G-Cter in SUMO2) linkage. An ATP-binding site is contributed by 376–378 (QTK). Residues K386, K397, K416, K418, K425, and K440 each participate in a glycyl lysine isopeptide (Lys-Gly) (interchain with G-Cter in SUMO2) cross-link. A Toprim domain is found at 455 to 572 (CTLILTEGDS…SLLRHRFLEE (118 aa)). E461 is a Mg(2+) binding site. Residues K466, K480, and K529 each participate in a glycyl lysine isopeptide (Lys-Gly) (interchain with G-Cter in SUMO2) cross-link. The Mg(2+) site is built by D541 and D543. Glycyl lysine isopeptide (Lys-Gly) (interchain with G-Cter in SUMO2) cross-links involve residues K584, K599, K614, K622, K625, K632, K639, K655, K662, and K676. One can recognise a Topo IIA-type catalytic domain in the interval 715–1171 (IPSMVDGLKP…SPSDLWKEDL (457 aa)). Y805 serves as the catalytic O-(5'-phospho-DNA)-tyrosine intermediate. The interval 990–999 (KLQTSLTCNS) is interaction with DNA. Residue K1075 forms a Glycyl lysine isopeptide (Lys-Gly) (interchain with G-Cter in SUMO2) linkage. Disordered regions lie at residues 1090–1121 (WKEA…VADS) and 1183–1215 (AKEK…PSPC). Residues 1099–1108 (DEEENEESDN) show a composition bias toward acidic residues. S1106 is modified (phosphoserine; by CK1). Glycyl lysine isopeptide (Lys-Gly) (interchain with G-Cter in SUMO2) cross-links involve residues K1114, K1196, and K1204. T1205 bears the Phosphothreonine mark. S1213 bears the Phosphoserine mark. K1228 participates in a covalent cross-link: Glycyl lysine isopeptide (Lys-Gly) (interchain with G-Cter in SUMO2). The segment at 1231-1533 (AEKKIKKKIK…LEESDEDDLF (303 aa)) is disordered. K1240 participates in a covalent cross-link: Glycyl lysine isopeptide (Lys-Gly) (interchain with G-Cter in SUMO1); alternate. K1240 is covalently cross-linked (Glycyl lysine isopeptide (Lys-Gly) (interchain with G-Cter in SUMO2); alternate). A Phosphothreonine modification is found at T1244. S1247 bears the Phosphoserine mark. A compositionally biased stretch (basic and acidic residues) spans 1256–1272 (EGLKQRLEKKQKREPGT). Residues K1259, K1276, K1283, and K1286 each participate in a glycyl lysine isopeptide (Lys-Gly) (interchain with G-Cter in SUMO2) cross-link. Phosphoserine is present on residues S1295, S1297, S1299, and S1302. Residue T1327 is modified to Phosphothreonine. S1332 and S1337 each carry phosphoserine. Position 1343 is a phosphothreonine (T1343). A phosphoserine mark is found at S1351 and S1354. The segment covering 1360–1371 (TSPKHTNKEPKP) has biased composition (basic and acidic residues). Residues K1363, K1367, and K1373 each participate in a glycyl lysine isopeptide (Lys-Gly) (interchain with G-Cter in SUMO2) cross-link. Phosphoserine is present on residues S1374 and S1377. A Glycyl lysine isopeptide (Lys-Gly) (interchain with G-Cter in SUMO2) cross-link involves residue K1387. 2 positions are modified to phosphoserine: S1393 and S1395. The segment covering 1409–1433 (KPVSKKNVTVKKTAAKSQSSTSTTG) has biased composition (low complexity). K1424 is covalently cross-linked (Glycyl lysine isopeptide (Lys-Gly) (interchain with G-Cter in SUMO2); alternate). Position 1424 is an N6-acetyllysine; alternate (K1424). An interaction with PLSCR1 region spans residues 1435 to 1441 (KKRAAPK). Positions 1443 to 1455 (AKKDPDLDSDVSK) are enriched in basic and acidic residues. A Glycyl lysine isopeptide (Lys-Gly) (interchain with G-Cter in SUMO2); alternate cross-link involves residue K1444. An N6-acetyllysine; alternate modification is found at K1444. A Phosphoserine modification is found at S1451. Glycyl lysine isopeptide (Lys-Gly) (interchain with G-Cter in SUMO2) cross-links involve residues K1456 and K1461. Residue S1471 is modified to Phosphoserine. A Phosphothreonine modification is found at T1472. 3 positions are modified to phosphoserine: S1473, S1476, and S1478. Residues K1486 and K1494 each participate in a glycyl lysine isopeptide (Lys-Gly) (interchain with G-Cter in SUMO2) cross-link. Over residues 1493 to 1504 (PKGESDDFHLDL) the composition is skewed to basic and acidic residues. Phosphoserine is present on residues S1497 and S1527.

Belongs to the type II topoisomerase family. As to quaternary structure, homodimer. Interacts with COPS5. Interacts with RECQL5; this stimulates DNA decatenation. Interacts with SETMAR; stimulates the topoisomerase activity. Interacts with DHX9; this interaction occurs in a E2 enzyme UBE2I- and RNA-dependent manner, negatively regulates DHX9-mediated double-stranded DNA and RNA duplex helicase activity and stimulates TOP2A-mediated supercoiled DNA relaxation activity. Interacts with HNRNPU (via C-terminus); this interaction protects the topoisomerase TOP2A from degradation and positively regulates the relaxation of supercoiled DNA in a RNA-dependent manner. Interacts with MCM3AP. Interacts with ERCC6. Interacts with PLSCR1. Interacts with GCNA; this interaction allows the resolution of topoisomerase II (TOP2A) DNA-protein cross-links. Interacts with POL1RA/RPA1 (via dock II) and UBTF in the context of Pol I complex; may assist Pol I transcription initiation by releasing supercoils occurring during DNA unwinding. Interacts with TPRN; TPRN interacts with a number of DNA damage response proteins, is recruited to sites of DNA damage and may play a role in DNA damage repair. Requires Mg(2+) as cofactor. Mn(2+) serves as cofactor. The cofactor is Ca(2+). Post-translationally, phosphorylation has no effect on catalytic activity. However, phosphorylation at Ser-1106 by CSNK1D/CK1 promotes DNA cleavable complex formation.

Its subcellular location is the cytoplasm. It is found in the nucleus. The protein localises to the nucleoplasm. The protein resides in the nucleolus. It catalyses the reaction ATP-dependent breakage, passage and rejoining of double-stranded DNA.. In terms of biological role, key decatenating enzyme that alters DNA topology by binding to two double-stranded DNA molecules, generating a double-stranded break in one of the strands, passing the intact strand through the broken strand, and religating the broken strand. May play a role in regulating the period length of BMAL1 transcriptional oscillation. The chain is DNA topoisomerase 2-alpha (TOP2A) from Sus scrofa (Pig).